We begin with the raw amino-acid sequence, 955 residues long: Glycine dehydrogenase (decarboxylating) (955 aa).

An N6-(pyridoxal phosphate)lysine modification is found at Lys-702.

It belongs to the GcvP family. In terms of assembly, the glycine cleavage system is composed of four proteins: P, T, L and H. Pyridoxal 5'-phosphate is required as a cofactor.

The catalysed reaction is N(6)-[(R)-lipoyl]-L-lysyl-[glycine-cleavage complex H protein] + glycine + H(+) = N(6)-[(R)-S(8)-aminomethyldihydrolipoyl]-L-lysyl-[glycine-cleavage complex H protein] + CO2. Its function is as follows. The glycine cleavage system catalyzes the degradation of glycine. The P protein binds the alpha-amino group of glycine through its pyridoxal phosphate cofactor; CO(2) is released and the remaining methylamine moiety is then transferred to the lipoamide cofactor of the H protein. This chain is Glycine dehydrogenase (decarboxylating), found in Bradyrhizobium diazoefficiens (strain JCM 10833 / BCRC 13528 / IAM 13628 / NBRC 14792 / USDA 110).